The following is a 252-amino-acid chain: NAD-dependent protein deacetylase (252 aa).

The 248-residue stretch at 1 to 248 (MYLVEEAKKV…PEVISHIQSL (248 aa)) folds into the Deacetylase sirtuin-type domain. Positions 26, 30, 37, 38, 102, 104, 105, and 120 each coordinate NAD(+). Phenylalanine 37 contacts nicotinamide. The nicotinamide site is built by valine 104 and aspartate 105. The Proton acceptor role is filled by histidine 120. Zn(2+)-binding residues include cysteine 128, cysteine 131, cysteine 153, and cysteine 155. NAD(+) is bound by residues serine 191, serine 192, asparagine 216, and isoleucine 234.

Belongs to the sirtuin family. Class U subfamily. Zn(2+) serves as cofactor.

It is found in the cytoplasm. The catalysed reaction is N(6)-acetyl-L-lysyl-[protein] + NAD(+) + H2O = 2''-O-acetyl-ADP-D-ribose + nicotinamide + L-lysyl-[protein]. Functionally, NAD-dependent protein deacetylase which modulates the activities of several enzymes which are inactive in their acetylated form. Deacetylates the N-terminal lysine residue of Alba, the major archaeal chromatin protein and that, in turn, increases Alba's DNA binding affinity, thereby repressing transcription. The sequence is that of NAD-dependent protein deacetylase from Sulfolobus acidocaldarius (strain ATCC 33909 / DSM 639 / JCM 8929 / NBRC 15157 / NCIMB 11770).